A 983-amino-acid chain; its full sequence is Seizure protein 6 homolog (983 aa).

The first 19 residues, 1–19, serve as a signal peptide directing secretion; it reads MRPAALLLLPSLLALLVHG. 2 disordered regions span residues 80-132 and 148-194; these read GQEK…WSLE and PGMA…QTTG. A compositionally biased stretch (polar residues) spans 101–112; it reads NQDSRPVFTSPT. Positions 154–167 are enriched in pro residues; sequence TPGPGERPNTPPPS. N-linked (GlcNAc...) asparagine glycosylation is present at asparagine 278. The Sushi 1 domain occupies 344–403; it reads LSCHFPRRPAYGAVTVTSLHPGGSARFRCATGYQLKGARLLTCLNATQPFWDSQEPVCIA. Cystine bridges form between cysteine 346–cysteine 386, cysteine 372–cysteine 401, cysteine 405–cysteine 432, cysteine 521–cysteine 563, cysteine 548–cysteine 578, cysteine 582–cysteine 608, cysteine 699–cysteine 741, cysteine 727–cysteine 754, cysteine 760–cysteine 802, cysteine 788–cysteine 819, cysteine 827–cysteine 869, and cysteine 855–cysteine 884. Residues asparagine 388, asparagine 425, and asparagine 530 are each glycosylated (N-linked (GlcNAc...) asparagine). The region spanning 405–516 is the CUB 1 domain; sequence CGGVIRNATT…AGMALRYEAF (112 aa). Residues 519-580 form the Sushi 2 domain; sequence GHCYEPFVKY…WNETEPACRA (62 aa). The CUB 2 domain maps to 582-693; that stretch reads CSGETTDSAG…QGFVIHFFEV (112 aa). Sushi domains follow at residues 697–756, 758–821, and 825–886; these read DTCP…SCQR, TSCL…KCLL, and KPCH…ICRA. A helical transmembrane segment spans residues 915–935; that stretch reads LAAAIFLPLVAMALLVGGVYL.

It belongs to the SEZ6 family.

It localises to the cell membrane. In terms of biological role, may play a role in cell-cell recognition and in neuronal membrane signaling. Seems to be important for the achievement of the necessary balance between dendrite elongation and branching during the elaboration of a complex dendritic arbor. Involved in the development of appropriate excitatory synaptic connectivity. This chain is Seizure protein 6 homolog (SEZ6), found in Bos taurus (Bovine).